The following is a 470-amino-acid chain: MPGFDYKFLEKPKRRLLCPLCGKPMREPVQVSTCGHRFCDTCLQEFLSEGVFKCPEDQLPLDYAKIYPDPELEVQVLGLAIRCIHSEEGCRWSGPLRHLQGHLNTCSFNVVPCPNRCPAKLSRRDLPAHLQHDCPKRRLKCEFCGCDFSGEAYESHEGVCPQESVYCENKCGARMMRRLLAQHATSECPKRTQPCAYCTKEFVYDTIQSHQYQCPRLPVPCPNQCGVGTVAREDLPTHLKDSCSTAFVLCPFKESGCKHRCPKLAMGRHVEESVKPHLAMMCALVSRQRQELQELRRELEELSIGSDGVLIWKIGSYGRRLQEAKAKPNLECFSPAFYTHKYGYKLQVSAFLNGNGSGEGTHLSIYIRVLPGAFDNLLEWPFARRVTFSLLDQSDPGLAKPQHVTETFHPDPNWKNFQKPGTWRGSLDESSLGFGYPKFISHQDIRKRNYVRDDAVFIRASVELPRKILS.

Residues 18-58 (CPLCGKPMREPVQVSTCGHRFCDTCLQEFLSEGVFKCPEDQ) form an RING-type zinc finger. 3 consecutive TRAF-type zinc fingers follow at residues 101-154 (GHLN…EAYE), 155-208 (SHEG…DTIQ), and 209-267 (SHQY…LAMG). A Glycyl lysine isopeptide (Lys-Gly) (interchain with G-Cter in ubiquitin) cross-link involves residue Lys-263. Residues 277 to 310 (HLAMMCALVSRQRQELQELRRELEELSIGSDGVL) adopt a coiled-coil conformation. Positions 307–462 (DGVLIWKIGS…DDAVFIRASV (156 aa)) constitute an MATH domain. A Phosphoserine modification is found at Ser-426.

Belongs to the TNF receptor-associated factor family. B subfamily. Homotrimer. Interacts with LTBR/TNFRSF3, NGFR/TNFRSF16, RPS6KB1 and TGFB1I1. Interacts with SMURF1. Interacts (via TRAF domain) with MAP3K4 (via kinase domain). Interacts with NCF1, TICAM1, IRAK1 and TRAF6, and is probably part of a complex containing TRAF4, NCF1, TICAM1, IRAK1 and TRAF6. Interacts (via MATH domain) with GP6 and GP1BB. Interacts with EGFR (via C-terminal region); this interaction promotes the formation of EGFR asymmetric dimers. Interacts with PKM; this interaction promotes PKM kinase activity. In terms of processing, polyubiquitinated, leading to its proteasomal degradation. Ubiquitinated at Lys-263 by the SCF(FBXL2) complex, leading to its degradation by the proteasome. Predominantly expressed in brain. Preferentially expressed by postmitotic undifferentiated neurons in developing central (CNS) and peripheral (PNS) nervous system, and in nervous tissues of sensory organs. In the embryo, protein expression was shown in brain, thymus, salivary glands and intestine. In the adult, protein expression is restricted to the brain (hippocampus and olfactory bulb).

It is found in the cytoplasm. The protein localises to the nucleus. It localises to the perinuclear region. Its subcellular location is the cell junction. The protein resides in the tight junction. It is found in the cell membrane. The protein localises to the cytoskeleton. The catalysed reaction is S-ubiquitinyl-[E2 ubiquitin-conjugating enzyme]-L-cysteine + [acceptor protein]-L-lysine = [E2 ubiquitin-conjugating enzyme]-L-cysteine + N(6)-ubiquitinyl-[acceptor protein]-L-lysine.. The protein operates within protein degradation; proteasomal ubiquitin-dependent pathway. Adapter protein with E3 ligase activity that is involved in many diverse biological processes including cell proliferation, migration, differentiation, DNA repair, platelet activation or apoptosis. Promotes EGFR-mediated signaling by facilitating the dimerization of EGFR and downstream AKT activation thereby promoting cell proliferation. Ubiquitinates SMURF2 through 'Lys-48'-linked ubiquitin chain leading to SMURF2 degradation through the proteasome and subsequently osteogenic differentiation. Promotes 'Lys-63'-mediated ubiquitination of CHK1 which in turn activates cell cycle arrest and activation of DNA repair. In addition, promotes an atypical 'Lys-29'-linked ubiquitination at the C-terminal end of IRS1 which is crucial for insulin-like growth factor (IGF) signal transduction. Regulates activation of NF-kappa-B in response to signaling through Toll-like receptors. Required for normal skeleton development, and for normal development of the respiratory tract. Required for activation of RPS6KB1 in response to TNF signaling. Modulates TRAF6 functions. Inhibits adipogenic differentiation by activating pyruvate kinase PKM activity and subsequently the beta-catenin signaling pathway. The protein is TNF receptor-associated factor 4 (Traf4) of Mus musculus (Mouse).